The sequence spans 205 residues: Recombination protein RecR (205 aa).

The C4-type zinc-finger motif lies at 58–75 (CSVCQNVTDRDADPCYIC). Positions 83–182 (SVICVVESPA…SVTKIARGIP (100 aa)) constitute a Toprim domain.

It belongs to the RecR family.

Its function is as follows. May play a role in DNA repair. It seems to be involved in an RecBC-independent recombinational process of DNA repair. It may act with RecF and RecO. This is Recombination protein RecR from Chlorobium limicola (strain DSM 245 / NBRC 103803 / 6330).